The following is a 130-amino-acid chain: Transcription antitermination protein NusB (130 aa).

Belongs to the NusB family.

Involved in transcription antitermination. Required for transcription of ribosomal RNA (rRNA) genes. Binds specifically to the boxA antiterminator sequence of the ribosomal RNA (rrn) operons. The protein is Transcription antitermination protein NusB of Macrococcus caseolyticus (strain JCSC5402) (Macrococcoides caseolyticum).